A 335-amino-acid polypeptide reads, in one-letter code: Phosphatidylglycerol--prolipoprotein diacylglyceryl transferase (335 aa).

The next 3 helical transmembrane spans lie at 31 to 51 (IYWY…TYSL), 67 to 87 (YIFL…LAIG), and 100 to 120 (LAIQ…FPLI). Arg-163 is an a 1,2-diacyl-sn-glycero-3-phospho-(1'-sn-glycerol) binding site. 3 helical membrane passes run 213–233 (PLFL…YFGL), 235–255 (YIKQ…YGVT), and 277–297 (SLLL…APLL).

This sequence belongs to the Lgt family.

The protein localises to the cell membrane. It catalyses the reaction L-cysteinyl-[prolipoprotein] + a 1,2-diacyl-sn-glycero-3-phospho-(1'-sn-glycerol) = an S-1,2-diacyl-sn-glyceryl-L-cysteinyl-[prolipoprotein] + sn-glycerol 1-phosphate + H(+). Its pathway is protein modification; lipoprotein biosynthesis (diacylglyceryl transfer). Catalyzes the transfer of the diacylglyceryl group from phosphatidylglycerol to the sulfhydryl group of the N-terminal cysteine of a prolipoprotein, the first step in the formation of mature lipoproteins. The polypeptide is Phosphatidylglycerol--prolipoprotein diacylglyceryl transferase (Ureaplasma parvum serovar 3 (strain ATCC 27815 / 27 / NCTC 11736)).